We begin with the raw amino-acid sequence, 317 residues long: Vacuolar arginine/histidine antiporter YPQ2 (317 aa).

Topologically, residues 1-13 (MSCSNGIWPTVSN) are vacuolar. The PQ-loop 1 domain occupies 8-71 (WPTVSNLCGS…AKLTGQLLFQ (64 aa)). Residues 14–34 (LCGSLSFFTSVISLFPQIIET) form a helical membrane-spanning segment. The Cytoplasmic portion of the chain corresponds to 35–39 (YRDKS). A helical transmembrane segment spans residues 40 to 62 (VDGLSPYFLLAWLCGDITSLIGA). Over 63-71 (KLTGQLLFQ) the chain is Vacuolar. The chain crosses the membrane as a helical span at residues 72 to 94 (ILLAIYFLLNDSFVCGQYYYYGV). The Cytoplasmic segment spans residues 95–143 (LHENKLATVGHEPKPLLPELVENGELLREEEDMIQGGSSAESPRSSRRR). A Phosphoserine modification is found at Ser-136. The chain crosses the membrane as a helical span at residues 144-164 (SAITAALAIAHTISTASAYPL). At 165-184 (NVGSTQSQVGPPGDGKNSQL) the chain is on the vacuolar side. A helical transmembrane segment spans residues 185–205 (GTILSWIGASFYVGARIPQLI). Positions 185–247 (GTILSWIGAS…SCRFLDNQNK (63 aa)) constitute a PQ-loop 2 domain. Residues 206–215 (KNYNRKSTDG) are Cytoplasmic-facing. A helical transmembrane segment spans residues 216–236 (LSPFLFATTLLCNITYNLSIF). Over 237-249 (TSCRFLDNQNKRE) the chain is Vacuolar. Residues 250-270 (FIVNELPFIFGSAGTIAFDLI) form a helical membrane-spanning segment. At 271-317 (YFYQYYILYATDMQLRELERELYSPEEDSAAQLVTERTSLLSGETQT) the chain is on the cytoplasmic side.

Belongs to the laat-1 family.

It localises to the vacuole membrane. The catalysed reaction is L-histidine(out) + L-arginine(in) = L-histidine(in) + L-arginine(out). Functionally, amino acid transporter that moves arginine across the vacuolar membrane. Active during nitrogen starvation when it exports stored vacuolar arginine to the cytosol, for use as a nitrogen source. Has been shown to function as an arginine/histidine antiporter when substrate is present on both sides of the membrane, but may also function as a uniporter. The polypeptide is Vacuolar arginine/histidine antiporter YPQ2 (YPQ2) (Saccharomyces cerevisiae (strain ATCC 204508 / S288c) (Baker's yeast)).